A 256-amino-acid polypeptide reads, in one-letter code: Isoprenyl transferase (256 aa).

D33 is an active-site residue. D33 lines the Mg(2+) pocket. Residues 34 to 37, W38, R46, H50, and 78 to 80 each bind substrate; these read GNGR and STE. The Proton acceptor role is filled by N81. Substrate-binding positions include W82, R84, R201, and 207 to 209; that span reads RIS. A Mg(2+)-binding site is contributed by E220.

This sequence belongs to the UPP synthase family. In terms of assembly, homodimer. Requires Mg(2+) as cofactor.

Its function is as follows. Catalyzes the condensation of isopentenyl diphosphate (IPP) with allylic pyrophosphates generating different type of terpenoids. This Staphylococcus haemolyticus (strain JCSC1435) protein is Isoprenyl transferase.